Consider the following 370-residue polypeptide: Platelet-derived growth factor D (370 aa).

The N-terminal stretch at 1 to 23 (MHRLILVSILVCANFCCYRDTFA) is a signal peptide. Residues 52 to 170 (RDENIRVTGT…PGFKIYYSFV (119 aa)) form the CUB domain. Cysteine 109 and cysteine 131 are disulfide-bonded. N-linked (GlcNAc...) asparagine glycosylation is present at asparagine 276. Intrachain disulfides connect cysteine 302–cysteine 360 and cysteine 306–cysteine 362.

This sequence belongs to the PDGF/VEGF growth factor family. In terms of assembly, homodimer; disulfide-linked. Interacts with PDGFRB homodimers, and with heterodimers formed by PDGFRA and PDGFRB. In terms of processing, activated by proteolytic cleavage. Proteolytic removal of the N-terminal CUB domain releasing the core domain is necessary for unmasking the receptor-binding epitopes of the core domain. Cleavage after Arg-247 or Arg-249 by urokinase plasminogen activator gives rise to the active form. As to expression, widely expressed. Expressed at high levels in the kidney, adrenal glands, eye and CNS. In the kidney the localization is confined to arterial and arteriolar vascular smooth muscle cells and is also detected at low levels in the glomeruli In the eye in the anterior segment it is localized to the iris and ciliary body. In the retina localizes intensely to the outer plexiform layer, which contains photoreceptor axons and the synaptic layer between photoreceptors and second order neurons. In the spinal cord, prominently expressed in the motorneurons.

It is found in the secreted. In terms of biological role, growth factor that plays an essential role in the regulation of embryonic development, cell proliferation, cell migration, survival and chemotaxis. Potent mitogen for cells of mesenchymal origin. Plays an important role in wound healing. Induces macrophage recruitment, increased interstitial pressure, and blood vessel maturation during angiogenesis. May play an important role in control of lens epithelial cell proliferation. Can initiate events that lead to a mesangial proliferative glomerulonephritis, including influx of monocytes and macrophages and production of extracellular matrix. The polypeptide is Platelet-derived growth factor D (Pdgfd) (Rattus norvegicus (Rat)).